Here is a 385-residue protein sequence, read N- to C-terminus: Spermidine/putrescine import ATP-binding protein PotA (385 aa).

The ABC transporter domain occupies 27 to 257; it reads ASFRAVSKHY…PANLFVAQFA (231 aa). 59 to 66 contacts ATP; the sequence is GPSGCGKT.

Belongs to the ABC transporter superfamily. Spermidine/putrescine importer (TC 3.A.1.11.1) family. In terms of assembly, the complex is composed of two ATP-binding proteins (PotA), two transmembrane proteins (PotB and PotC) and a solute-binding protein (PotD).

It localises to the cell inner membrane. The catalysed reaction is ATP + H2O + polyamine-[polyamine-binding protein]Side 1 = ADP + phosphate + polyamineSide 2 + [polyamine-binding protein]Side 1.. Functionally, part of the ABC transporter complex PotABCD involved in spermidine/putrescine import. Responsible for energy coupling to the transport system. In Methylococcus capsulatus (strain ATCC 33009 / NCIMB 11132 / Bath), this protein is Spermidine/putrescine import ATP-binding protein PotA.